The primary structure comprises 156 residues: MPSVESFELDHTIVKAPYVRHCGKHKIGSDGEVNKFDIRFCQPNKEALKPGVIHTLEHLLAINIRRFSEEYDHFDVIDISPMGCQTGYYLIMSGTPSVEEIIDVLEKTMTYSLSIETVPAATEKECGQAALHDLEGTKEVMRKWLSEDKGSLKQVF.

Positions 54, 58, and 126 each coordinate Fe cation.

It belongs to the LuxS family. In terms of assembly, homodimer. Fe cation is required as a cofactor.

It carries out the reaction S-(5-deoxy-D-ribos-5-yl)-L-homocysteine = (S)-4,5-dihydroxypentane-2,3-dione + L-homocysteine. Its function is as follows. Involved in the synthesis of autoinducer 2 (AI-2) which is secreted by bacteria and is used to communicate both the cell density and the metabolic potential of the environment. The regulation of gene expression in response to changes in cell density is called quorum sensing. Catalyzes the transformation of S-ribosylhomocysteine (RHC) to homocysteine (HC) and 4,5-dihydroxy-2,3-pentadione (DPD). The chain is S-ribosylhomocysteine lyase from Shouchella clausii (strain KSM-K16) (Alkalihalobacillus clausii).